A 1105-amino-acid chain; its full sequence is uncharacterized protein (1105 aa).

It belongs to the mycobacterial PPE family.

This is an uncharacterized protein from Mycobacterium tuberculosis (strain CDC 1551 / Oshkosh).